The following is a 75-amino-acid chain: ATP synthase subunit c (75 aa).

A run of 2 helical transmembrane segments spans residues 13-33 (LSVI…GILF) and 55-75 (FIGL…ALII).

The protein belongs to the ATPase C chain family. In terms of assembly, F-type ATPases have 2 components, F(1) - the catalytic core - and F(0) - the membrane proton channel. F(1) has five subunits: alpha(3), beta(3), gamma(1), delta(1), epsilon(1). F(0) has three main subunits: a(1), b(2) and c(10-14). The alpha and beta chains form an alternating ring which encloses part of the gamma chain. F(1) is attached to F(0) by a central stalk formed by the gamma and epsilon chains, while a peripheral stalk is formed by the delta and b chains.

The protein resides in the cell membrane. Its function is as follows. F(1)F(0) ATP synthase produces ATP from ADP in the presence of a proton or sodium gradient. F-type ATPases consist of two structural domains, F(1) containing the extramembraneous catalytic core and F(0) containing the membrane proton channel, linked together by a central stalk and a peripheral stalk. During catalysis, ATP synthesis in the catalytic domain of F(1) is coupled via a rotary mechanism of the central stalk subunits to proton translocation. Key component of the F(0) channel; it plays a direct role in translocation across the membrane. A homomeric c-ring of between 10-14 subunits forms the central stalk rotor element with the F(1) delta and epsilon subunits. The sequence is that of ATP synthase subunit c from Bifidobacterium longum (strain DJO10A).